We begin with the raw amino-acid sequence, 171 residues long: MTAILVTGYRSFELGIFSEKDKRVAIIKKAIKRDLIAYLEEGVDWFIFTGNLGFEQWALEVANDLKKTYPLKTATIFAFETHGSTWNDRNQQHLQQFRATDFVKYSYPSYESPKQLKSYHHFLIHNTDGAYLFYDSEHETRLSYLVAAMKEQPCYPLSFLNFERLNDIADE.

Belongs to the UPF0398 family.

In Streptococcus equi subsp. zooepidemicus (strain MGCS10565), this protein is UPF0398 protein Sez_1569.